Consider the following 479-residue polypeptide: Glutamate--tRNA ligase (479 aa).

Positions 9 to 19 (PSPTGLFHIGT) match the 'HIGH' region motif. A 'KMSKS' region motif is present at residues 248-252 (KLSKR). Residue Lys251 participates in ATP binding.

The protein belongs to the class-I aminoacyl-tRNA synthetase family. Glutamate--tRNA ligase type 1 subfamily. In terms of assembly, monomer.

It is found in the cytoplasm. It catalyses the reaction tRNA(Glu) + L-glutamate + ATP = L-glutamyl-tRNA(Glu) + AMP + diphosphate. Catalyzes the attachment of glutamate to tRNA(Glu) in a two-step reaction: glutamate is first activated by ATP to form Glu-AMP and then transferred to the acceptor end of tRNA(Glu). This Prochlorococcus marinus (strain MIT 9312) protein is Glutamate--tRNA ligase.